Reading from the N-terminus, the 134-residue chain is MSFIREFKEFVMRGNVIDLAVAVVIGAAFGKIVTALVDKIISPLIGVMVGGIDFSKLSLTLKAATVDAAGKEVPAVVIGYGDFLNTILQFIIIAFAIFIIVKMINKVINKQPLPPETPSEDVLLLREIRDSLKK.

Transmembrane regions (helical) follow at residues 16–36 (VIDL…VTAL) and 81–101 (GDFL…FIIV).

Belongs to the MscL family. Homopentamer.

The protein localises to the cell inner membrane. Its function is as follows. Channel that opens in response to stretch forces in the membrane lipid bilayer. May participate in the regulation of osmotic pressure changes within the cell. In Xylella fastidiosa (strain 9a5c), this protein is Large-conductance mechanosensitive channel.